The following is a 286-amino-acid chain: Citrullinase (286 aa).

The CN hydrolase domain maps to 4–258 (IKVAVVQLSF…DDILYATFDF (255 aa)). Catalysis depends on E43, which acts as the Proton acceptor. K116 is a catalytic residue. The active-site Nucleophile is C153.

It belongs to the carbon-nitrogen hydrolase superfamily.

It catalyses the reaction L-citrulline + H2O + 2 H(+) = L-ornithine + NH4(+) + CO2. Its function is as follows. Catalyzes the degradation of citrulline into ornithine, carbon dioxide and ammonia. Contributes to intramacrophage survival, in vivo growth and pathogenesis. This is Citrullinase from Francisella tularensis subsp. tularensis (strain SCHU S4 / Schu 4).